Reading from the N-terminus, the 270-residue chain is Thiazole synthase (270 aa).

K112 functions as the Schiff-base intermediate with DXP in the catalytic mechanism. 1-deoxy-D-xylulose 5-phosphate contacts are provided by residues G173, 199 to 200 (AG), and 221 to 222 (NS).

Belongs to the ThiG family. In terms of assembly, homotetramer. Forms heterodimers with either ThiH or ThiS.

It localises to the cytoplasm. The catalysed reaction is [ThiS sulfur-carrier protein]-C-terminal-Gly-aminoethanethioate + 2-iminoacetate + 1-deoxy-D-xylulose 5-phosphate = [ThiS sulfur-carrier protein]-C-terminal Gly-Gly + 2-[(2R,5Z)-2-carboxy-4-methylthiazol-5(2H)-ylidene]ethyl phosphate + 2 H2O + H(+). The protein operates within cofactor biosynthesis; thiamine diphosphate biosynthesis. Functionally, catalyzes the rearrangement of 1-deoxy-D-xylulose 5-phosphate (DXP) to produce the thiazole phosphate moiety of thiamine. Sulfur is provided by the thiocarboxylate moiety of the carrier protein ThiS. In vitro, sulfur can be provided by H(2)S. The sequence is that of Thiazole synthase from Pseudomonas entomophila (strain L48).